The chain runs to 385 residues: 1-deoxy-D-xylulose 5-phosphate reductoisomerase (385 aa).

Positions 10, 11, 12, 13, and 124 each coordinate NADPH. Position 125 (Lys125) interacts with 1-deoxy-D-xylulose 5-phosphate. Residue Glu126 participates in NADPH binding. Asp150 provides a ligand contact to Mn(2+). 4 residues coordinate 1-deoxy-D-xylulose 5-phosphate: Ser151, Glu152, Ser176, and His199. Glu152 is a Mn(2+) binding site. Gly205 provides a ligand contact to NADPH. Positions 212, 217, 218, and 221 each coordinate 1-deoxy-D-xylulose 5-phosphate. Glu221 is a binding site for Mn(2+).

This sequence belongs to the DXR family. Requires Mg(2+) as cofactor. The cofactor is Mn(2+).

It catalyses the reaction 2-C-methyl-D-erythritol 4-phosphate + NADP(+) = 1-deoxy-D-xylulose 5-phosphate + NADPH + H(+). It functions in the pathway isoprenoid biosynthesis; isopentenyl diphosphate biosynthesis via DXP pathway; isopentenyl diphosphate from 1-deoxy-D-xylulose 5-phosphate: step 1/6. Functionally, catalyzes the NADPH-dependent rearrangement and reduction of 1-deoxy-D-xylulose-5-phosphate (DXP) to 2-C-methyl-D-erythritol 4-phosphate (MEP). This Clostridium botulinum (strain Alaska E43 / Type E3) protein is 1-deoxy-D-xylulose 5-phosphate reductoisomerase.